The following is a 235-amino-acid chain: tRNA pseudouridine synthase B (235 aa).

The active-site Nucleophile is the aspartate 45.

Belongs to the pseudouridine synthase TruB family. Type 1 subfamily.

The catalysed reaction is uridine(55) in tRNA = pseudouridine(55) in tRNA. Responsible for synthesis of pseudouridine from uracil-55 in the psi GC loop of transfer RNAs. The chain is tRNA pseudouridine synthase B from Chlamydia felis (strain Fe/C-56) (Chlamydophila felis).